The following is a 571-amino-acid chain: DM7 family protein CG15332 (571 aa).

The tract at residues T440 to V472 is disordered. Acidic residues predominate over residues L457–D471.

This sequence belongs to the DM7 family.

This chain is DM7 family protein CG15332, found in Drosophila melanogaster (Fruit fly).